Consider the following 362-residue polypeptide: Peptide chain release factor 1 (362 aa).

Residue Gln237 is modified to N5-methylglutamine.

Belongs to the prokaryotic/mitochondrial release factor family. Methylated by PrmC. Methylation increases the termination efficiency of RF1.

Its subcellular location is the cytoplasm. In terms of biological role, peptide chain release factor 1 directs the termination of translation in response to the peptide chain termination codons UAG and UAA. This Vibrio atlanticus (strain LGP32) (Vibrio splendidus (strain Mel32)) protein is Peptide chain release factor 1.